The following is a 252-amino-acid chain: Cilia- and flagella-associated protein 300 (252 aa).

It belongs to the CFAP300 family.

The protein resides in the cytoplasm. Its subcellular location is the cytoskeleton. It is found in the cilium axoneme. Cilium- and flagellum-specific protein that plays a role in axonemal structure organization and motility. Plays a role in outer and inner axonemal dynein arm assembly. In Paramecium tetraurelia, this protein is Cilia- and flagella-associated protein 300.